Consider the following 532-residue polypeptide: GH3 domain-containing protein (532 aa).

Residues 1–18 form the signal peptide; it reads MLLLWLLLLLLLLVPLLA. The interval 100-123 is disordered; the sequence is LTQTSHTQEQESEETLPSPASPQY. 2 N-linked (GlcNAc...) asparagine glycosylation sites follow: Asn-356 and Asn-451.

Belongs to the GH3 family. Highly expressed in mammary tissues from mature virgins and at day 13 of pregnancy, and at lower level during lactation. Expressed at intermediate level in liver. Expressed at lower level in kidney, heart and brain.

It localises to the endoplasmic reticulum. The protein localises to the nucleus envelope. The chain is GH3 domain-containing protein (Ghdc) from Mus musculus (Mouse).